The chain runs to 235 residues: 2-C-methyl-D-erythritol 4-phosphate cytidylyltransferase (235 aa).

The protein belongs to the IspD/TarI cytidylyltransferase family. IspD subfamily. As to quaternary structure, homodimer.

The enzyme catalyses 2-C-methyl-D-erythritol 4-phosphate + CTP + H(+) = 4-CDP-2-C-methyl-D-erythritol + diphosphate. The protein operates within isoprenoid biosynthesis; isopentenyl diphosphate biosynthesis via DXP pathway; isopentenyl diphosphate from 1-deoxy-D-xylulose 5-phosphate: step 2/6. Its function is as follows. Catalyzes the formation of 4-diphosphocytidyl-2-C-methyl-D-erythritol from CTP and 2-C-methyl-D-erythritol 4-phosphate (MEP). This is 2-C-methyl-D-erythritol 4-phosphate cytidylyltransferase from Serratia proteamaculans (strain 568).